The following is a 249-amino-acid chain: Pyridoxine 5'-phosphate synthase (249 aa).

Asn-7 contributes to the 3-amino-2-oxopropyl phosphate binding site. 1-deoxy-D-xylulose 5-phosphate is bound at residue Asp-9–His-10. Arg-18 contributes to the 3-amino-2-oxopropyl phosphate binding site. The active-site Proton acceptor is the His-43. Residues Arg-45 and His-50 each coordinate 1-deoxy-D-xylulose 5-phosphate. Residue Glu-70 is the Proton acceptor of the active site. Thr-100 is a binding site for 1-deoxy-D-xylulose 5-phosphate. The active-site Proton donor is His-190. Residues Gly-191 and Gly-212–His-213 each bind 3-amino-2-oxopropyl phosphate.

This sequence belongs to the PNP synthase family. In terms of assembly, homooctamer; tetramer of dimers.

Its subcellular location is the cytoplasm. The enzyme catalyses 3-amino-2-oxopropyl phosphate + 1-deoxy-D-xylulose 5-phosphate = pyridoxine 5'-phosphate + phosphate + 2 H2O + H(+). It functions in the pathway cofactor biosynthesis; pyridoxine 5'-phosphate biosynthesis; pyridoxine 5'-phosphate from D-erythrose 4-phosphate: step 5/5. Its function is as follows. Catalyzes the complicated ring closure reaction between the two acyclic compounds 1-deoxy-D-xylulose-5-phosphate (DXP) and 3-amino-2-oxopropyl phosphate (1-amino-acetone-3-phosphate or AAP) to form pyridoxine 5'-phosphate (PNP) and inorganic phosphate. This Synechococcus sp. (strain CC9605) protein is Pyridoxine 5'-phosphate synthase.